A 276-amino-acid polypeptide reads, in one-letter code: MLHRSFFRFAALADKKAFMELVKALRYRTEAPISDCSAALTEAAGDMDAAMQLLRKRGVARAMKKGDCVTEHGFVVSCVGSTPASGAAIITMCSETDFAARNEHFQRTCVQARDQLRKLMDATNGAVLANPEEAAKQLSDIMGEELRAAIAVLGENMRIRSIAPLVPAPHMSERLLVGSYTHGVLNVDGVGRIVGLVAVSQVRENEVISKDVLTSIGRHFVATSGAEGNYAHQNFFGSETETVGKWLKHHGLTFSSSLVQEFGKEPVVHTAAEPHQ.

The protein belongs to the EF-Ts family.

It localises to the mitochondrion. Functionally, associates with the EF-Tu.GDP complex and induces the exchange of GDP to GTP. It remains bound to the aminoacyl-tRNA.EF-Tu.GTP complex up to the GTP hydrolysis stage on the ribosome. In Leishmania braziliensis, this protein is Elongation factor Ts, mitochondrial.